The sequence spans 318 residues: UDP-3-O-acylglucosamine N-acyltransferase 1 (318 aa).

The active-site Proton acceptor is histidine 230.

The protein belongs to the transferase hexapeptide repeat family. LpxD subfamily. In terms of assembly, homotrimer.

The enzyme catalyses a UDP-3-O-[(3R)-3-hydroxyacyl]-alpha-D-glucosamine + a (3R)-hydroxyacyl-[ACP] = a UDP-2-N,3-O-bis[(3R)-3-hydroxyacyl]-alpha-D-glucosamine + holo-[ACP] + H(+). It participates in bacterial outer membrane biogenesis; LPS lipid A biosynthesis. In terms of biological role, catalyzes the N-acylation of UDP-3-O-acylglucosamine using 3-hydroxyacyl-ACP as the acyl donor. Is involved in the biosynthesis of lipid A, a phosphorylated glycolipid that anchors the lipopolysaccharide to the outer membrane of the cell. This is UDP-3-O-acylglucosamine N-acyltransferase 1 from Sulfurimonas denitrificans (strain ATCC 33889 / DSM 1251) (Thiomicrospira denitrificans (strain ATCC 33889 / DSM 1251)).